Reading from the N-terminus, the 819-residue chain is Leucine--tRNA ligase (819 aa).

Residues 36-46 carry the 'HIGH' region motif; that stretch reads PYPSGKIHMGH. Residues 586–590 carry the 'KMSKS' region motif; sequence KMSKS. Lys-589 contacts ATP.

The protein belongs to the class-I aminoacyl-tRNA synthetase family.

It localises to the cytoplasm. The enzyme catalyses tRNA(Leu) + L-leucine + ATP = L-leucyl-tRNA(Leu) + AMP + diphosphate. In Wolbachia pipientis subsp. Culex pipiens (strain wPip), this protein is Leucine--tRNA ligase.